Consider the following 156-residue polypeptide: Endoribonuclease YbeY (156 aa).

The Zn(2+) site is built by His122, His126, and His132.

This sequence belongs to the endoribonuclease YbeY family. It depends on Zn(2+) as a cofactor.

It localises to the cytoplasm. Functionally, single strand-specific metallo-endoribonuclease involved in late-stage 70S ribosome quality control and in maturation of the 3' terminus of the 16S rRNA. The protein is Endoribonuclease YbeY of Geobacillus sp. (strain WCH70).